Consider the following 463-residue polypeptide: Glycogen synthase (463 aa).

Lysine 15 serves as a coordination point for ADP-alpha-D-glucose.

The protein belongs to the glycosyltransferase 1 family. Bacterial/plant glycogen synthase subfamily.

The catalysed reaction is [(1-&gt;4)-alpha-D-glucosyl](n) + ADP-alpha-D-glucose = [(1-&gt;4)-alpha-D-glucosyl](n+1) + ADP + H(+). The protein operates within glycan biosynthesis; glycogen biosynthesis. Synthesizes alpha-1,4-glucan chains using ADP-glucose. The chain is Glycogen synthase from Aquifex aeolicus (strain VF5).